Reading from the N-terminus, the 181-residue chain is Oligoribonuclease (181 aa).

The Exonuclease domain occupies 8–171 (LIWIDLEMTG…DDIRESIAEL (164 aa)). The active site involves Tyr129.

It belongs to the oligoribonuclease family.

The protein resides in the cytoplasm. Functionally, 3'-to-5' exoribonuclease specific for small oligoribonucleotides. The sequence is that of Oligoribonuclease from Vibrio vulnificus (strain CMCP6).